A 375-amino-acid polypeptide reads, in one-letter code: 4,4'-diaponeurosporenoate glycosyltransferase (375 aa).

Transmembrane regions (helical) follow at residues 3-23, 164-184, 277-297, and 330-350; these read WLSR…ALIF, FYEG…NVFS, IMTA…GLCL, and FSNL…KIFI.

It belongs to the glycosyltransferase 2 family. CrtQ subfamily.

Its subcellular location is the cell membrane. It functions in the pathway carotenoid biosynthesis; staphyloxanthin biosynthesis; staphyloxanthin from farnesyl diphosphate: step 4/5. Functionally, catalyzes the glycosylation of 4,4'-diaponeurosporenoate, i.e. the esterification of glucose at the C1'' position with the carboxyl group of 4,4'-diaponeurosporenic acid, to form glycosyl-4,4'-diaponeurosporenoate. This is a step in the biosynthesis of staphyloxanthin, an orange pigment present in most staphylococci strains. The chain is 4,4'-diaponeurosporenoate glycosyltransferase (crtQ) from Staphylococcus aureus (strain USA300).